We begin with the raw amino-acid sequence, 199 residues long: Fe/S biogenesis protein NfuA (199 aa).

[4Fe-4S] cluster is bound by residues Cys-151 and Cys-154.

It belongs to the NfuA family. As to quaternary structure, homodimer. [4Fe-4S] cluster is required as a cofactor.

In terms of biological role, involved in iron-sulfur cluster biogenesis. Binds a 4Fe-4S cluster, can transfer this cluster to apoproteins, and thereby intervenes in the maturation of Fe/S proteins. Could also act as a scaffold/chaperone for damaged Fe/S proteins. The polypeptide is Fe/S biogenesis protein NfuA (Xanthomonas campestris pv. campestris (strain 8004)).